Reading from the N-terminus, the 235-residue chain is Purine nucleoside phosphorylase DeoD-type (235 aa).

Position 4 (H4) interacts with a purine D-ribonucleoside. Phosphate is bound by residues G20, R24, R43, and 87–90 (RVGT). Residues E162, 179-181 (EME), and 203-204 (SD) contribute to the a purine D-ribonucleoside site. The active-site Proton donor is D204.

Belongs to the PNP/UDP phosphorylase family. In terms of assembly, homohexamer; trimer of homodimers.

The enzyme catalyses a purine D-ribonucleoside + phosphate = a purine nucleobase + alpha-D-ribose 1-phosphate. The catalysed reaction is a purine 2'-deoxy-D-ribonucleoside + phosphate = a purine nucleobase + 2-deoxy-alpha-D-ribose 1-phosphate. Its function is as follows. Catalyzes the reversible phosphorolytic breakdown of the N-glycosidic bond in the beta-(deoxy)ribonucleoside molecules, with the formation of the corresponding free purine bases and pentose-1-phosphate. This Bacillus cytotoxicus (strain DSM 22905 / CIP 110041 / 391-98 / NVH 391-98) protein is Purine nucleoside phosphorylase DeoD-type.